We begin with the raw amino-acid sequence, 1176 residues long: Surface-layer 125 kDa protein (1176 aa).

The first 30 residues, 1 to 30 (MAKQNKGRKFFAASATAALVASAIVPVASA), serve as a signal peptide directing secretion. SLH domains follow at residues 31 to 88 (AQLN…LEAE), 89 to 152 (GDVN…DLSE), and 153 to 216 (FADA…PKVD).

It localises to the secreted. The protein resides in the cell wall. The protein localises to the S-layer. Its function is as follows. The S-layer is a paracrystalline mono-layered assembly of proteins which coat the surface of bacteria. The protein is Surface-layer 125 kDa protein of Lysinibacillus sphaericus (Bacillus sphaericus).